A 377-amino-acid chain; its full sequence is Putative F-box protein At1g70380 (377 aa).

The region spanning 3 to 48 is the F-box domain; sequence NTSFETLALDMQIEILARLPLKYLMRCMCVSKKWASLIRGEDFRSA.

In Arabidopsis thaliana (Mouse-ear cress), this protein is Putative F-box protein At1g70380.